Reading from the N-terminus, the 404-residue chain is Putative Peroxidase 48 (404 aa).

Positions 1 to 18 are cleaved as a signal peptide; sequence MRFLGDYKFALLTCSVIA. 4 cysteine pairs are disulfide-bonded: Cys-77/Cys-156, Cys-110/Cys-115, Cys-162/Cys-397, and Cys-241/Cys-273. His-108 functions as the Proton acceptor in the catalytic mechanism. Ca(2+)-binding residues include Asp-109, Ile-112, Gly-114, Asp-116, and Ser-118. Asn-136 is a glycosylation site (N-linked (GlcNAc...) asparagine). Pro-204 is a binding site for substrate. His-234 provides a ligand contact to heme b. A Ca(2+)-binding site is contributed by Ser-235. An N-linked (GlcNAc...) asparagine glycan is attached at Asn-250. Residues 276–307 are disordered; the sequence is SVSTSSPSAPPDIGLPPSLPASDSENSYGMSS. Residues 283 to 294 are compositionally biased toward pro residues; sequence SAPPDIGLPPSL. Asp-287 is a Ca(2+) binding site. Positions 296 to 307 are enriched in polar residues; it reads ASDSENSYGMSS.

It belongs to the peroxidase family. Classical plant (class III) peroxidase subfamily. The cofactor is heme b. It depends on Ca(2+) as a cofactor.

The protein localises to the secreted. It carries out the reaction 2 a phenolic donor + H2O2 = 2 a phenolic radical donor + 2 H2O. Functionally, removal of H(2)O(2), oxidation of toxic reductants, biosynthesis and degradation of lignin, suberization, auxin catabolism, response to environmental stresses such as wounding, pathogen attack and oxidative stress. These functions might be dependent on each isozyme/isoform in each plant tissue. This chain is Putative Peroxidase 48 (PER48), found in Arabidopsis thaliana (Mouse-ear cress).